The primary structure comprises 178 residues: RNA replicase polyprotein (178 aa).

Belongs to the tymovirus NS35 RNA replicase polyprotein family.

The enzyme catalyses RNA(n) + a ribonucleoside 5'-triphosphate = RNA(n+1) + diphosphate. This Physalis heterophylla (PhMV) protein is RNA replicase polyprotein.